A 258-amino-acid chain; its full sequence is uncharacterized protein (258 aa).

3 helical membrane-spanning segments follow: residues 38-58 (VFGLLIALICFSNVLCFLFIA), 72-92 (ALIFTLFIPFVTSLLANIIFI), and 111-131 (FLVICAFSSLPIVNIWLMLWW).

It localises to the cell membrane. This is an uncharacterized protein from Mycoplasma pneumoniae (strain ATCC 29342 / M129 / Subtype 1) (Mycoplasmoides pneumoniae).